Consider the following 141-residue polypeptide: Nucleoside diphosphate kinase (141 aa).

Lys11, Phe59, Arg87, Thr93, Arg104, and Asn114 together coordinate ATP. His117 (pros-phosphohistidine intermediate) is an active-site residue.

This sequence belongs to the NDK family. Homotetramer. The cofactor is Mg(2+).

It is found in the cytoplasm. It catalyses the reaction a 2'-deoxyribonucleoside 5'-diphosphate + ATP = a 2'-deoxyribonucleoside 5'-triphosphate + ADP. The catalysed reaction is a ribonucleoside 5'-diphosphate + ATP = a ribonucleoside 5'-triphosphate + ADP. In terms of biological role, major role in the synthesis of nucleoside triphosphates other than ATP. The ATP gamma phosphate is transferred to the NDP beta phosphate via a ping-pong mechanism, using a phosphorylated active-site intermediate. The protein is Nucleoside diphosphate kinase of Serratia proteamaculans (strain 568).